An 867-amino-acid polypeptide reads, in one-letter code: Probable beta-glucosidase A (867 aa).

Positions 1–18 (MRFSWLEVAVTAASLANA) are cleaved as a signal peptide. Residues asparagine 67, asparagine 218, and asparagine 259 are each glycosylated (N-linked (GlcNAc...) asparagine). Residue aspartate 287 is part of the active site. Asparagine 322, asparagine 329, asparagine 361, asparagine 449, asparagine 530, asparagine 549, asparagine 571, asparagine 675, and asparagine 719 each carry an N-linked (GlcNAc...) asparagine glycan.

This sequence belongs to the glycosyl hydrolase 3 family.

The protein resides in the secreted. It carries out the reaction Hydrolysis of terminal, non-reducing beta-D-glucosyl residues with release of beta-D-glucose.. It functions in the pathway glycan metabolism; cellulose degradation. Functionally, beta-glucosidases are one of a number of cellulolytic enzymes involved in the degradation of cellulosic biomass. Catalyzes the last step releasing glucose from the inhibitory cellobiose. The sequence is that of Probable beta-glucosidase A (bglA) from Aspergillus clavatus (strain ATCC 1007 / CBS 513.65 / DSM 816 / NCTC 3887 / NRRL 1 / QM 1276 / 107).